Here is a 91-residue protein sequence, read N- to C-terminus: RING finger protein Z (91 aa).

The N-myristoyl glycine; by host moiety is linked to residue Gly2. The RING-type; atypical zinc-finger motif lies at 35 to 71; it reads CKCCWFQDKNLVECSDHYLCLKCISSMLKRGKNCEIC. Positions 85-88 match the PTAP/PSAP motif motif; sequence PTAP.

It belongs to the arenaviridae Z protein family. In terms of assembly, interacts with protein NP; this interaction probably directs the encapsidated genome to budding sites. Interacts (via RING domain) with polymerase L; this interaction inhibits viral transcription and replication, Z partially blocks the product exit tunnel for the releasing nascent RNA product. Interacts with the glycoprotein complex; this interaction plays a role in virion budding. Interacts with host eIF4E; this interaction results in eIF4E reduced affinity for its substrate, the 5'-m7 G cap structure. Interacts (via late-budding domain) with host TSG101; this interaction is essential for budding and release of viral particles. Interacts with host RPLP0; this interaction may serve to load ribosome-like particles inside the virion. Interacts with host PML; this interaction induces PML bodies redistribution in the cytoplasm upon viral infection. Post-translationally, myristoylation is required for the role of RING finger protein Z in assembly and budding.

It is found in the virion. The protein resides in the host cytoplasm. Its subcellular location is the host perinuclear region. It localises to the host cell membrane. Plays a crucial role in virion assembly and budding. Expressed late in the virus life cycle, it acts as an inhibitor of viral transcription and RNA synthesis by interacting with the viral polymerase L. Presumably recruits the NP encapsidated genome to cellular membranes at budding sites via direct interaction with NP. Plays critical roles in the final steps of viral release by interacting with host TSG101, a member of the vacuolar protein-sorting pathway and using other cellular host proteins involved in vesicle formation pathway. The budding of the virus progeny occurs after association of protein Z with the viral glycoprotein complex SSP-GP1-GP2 at the cell periphery, step that requires myristoylation of protein Z. Also selectively represses protein production by associating with host eIF4E. In cell-based minigenome assay, has an inhibitory effect on the ribonucleoprotein machinery (vRNP), which is responsible for the replication and transcription of the viral genome. The polypeptide is RING finger protein Z (Latino mammarenavirus (isolate Rat/Bolivia/MARU 1924/1965) (LATV)).